We begin with the raw amino-acid sequence, 205 residues long: MSSCSRTRLSRALGVPLTPKAARLMEVRPYPPGQHGRFRRKGDSDYAVRLREKQRLRGQYGLREKQLASVYHEARRVKGLAGENLVEMLEMRLDALVLRAAFARSISQARQLVVHRHILVDGKLVDRPSYSVSPGQTVKVKPKSVPLDPFQVAASGGHADVLPPIPGYIEADLEGLSFRLVRRPKRSEVPVTCNVQLVVEYYAAR.

The region spanning 91–149 (MRLDALVLRAAFARSISQARQLVVHRHILVDGKLVDRPSYSVSPGQTVKVKPKSVPLDP) is the S4 RNA-binding domain.

The protein belongs to the universal ribosomal protein uS4 family. As to quaternary structure, part of the 30S ribosomal subunit. Contacts protein S5. The interaction surface between S4 and S5 is involved in control of translational fidelity.

Its function is as follows. One of the primary rRNA binding proteins, it binds directly to 16S rRNA where it nucleates assembly of the body of the 30S subunit. In terms of biological role, with S5 and S12 plays an important role in translational accuracy. The sequence is that of Small ribosomal subunit protein uS4 from Tropheryma whipplei (strain TW08/27) (Whipple's bacillus).